We begin with the raw amino-acid sequence, 228 residues long: MIDAFFIAGTDTDVGKTVASKAVLQALAAKGLNTIGYKPVAAGSEKTEQGWRNSDALHLQKAATLEVAYEDVNPYALELPASPHIAAKHEQVEIEYDLLSEKLAQHKEQADVVLVEGAGGWRVPVSDTDSLSTWVQQEQLPVVLVVGIKLGCLSHALLTAEIIKADGLNLVGWIANRVNPGTEHYADIIEMLESRIDAPKLGEIPYIPSAKRKELGKYINVEPLLNID.

ATP is bound at residue 13 to 18 (DVGKTV). T17 contacts Mg(2+). K38 is a catalytic residue. ATP contacts are provided by residues D55, 116-119 (EGAG), 176-177 (NR), and 205-207 (PYI). Mg(2+)-binding residues include D55 and E116.

Belongs to the dethiobiotin synthetase family. Homodimer. The cofactor is Mg(2+).

It localises to the cytoplasm. The enzyme catalyses (7R,8S)-7,8-diammoniononanoate + CO2 + ATP = (4R,5S)-dethiobiotin + ADP + phosphate + 3 H(+). Its pathway is cofactor biosynthesis; biotin biosynthesis; biotin from 7,8-diaminononanoate: step 1/2. Its function is as follows. Catalyzes a mechanistically unusual reaction, the ATP-dependent insertion of CO2 between the N7 and N8 nitrogen atoms of 7,8-diaminopelargonic acid (DAPA, also called 7,8-diammoniononanoate) to form a ureido ring. This is ATP-dependent dethiobiotin synthetase BioD from Vibrio parahaemolyticus serotype O3:K6 (strain RIMD 2210633).